The following is a 62-amino-acid chain: E3 SUMO-protein ligase EGR2 (62 aa).

3 consecutive C2H2-type zinc fingers follow at residues 1 to 21 (AEGC…IRIH), 27 to 49 (FQCA…IRTH), and 55 to 62 (FACDYCGR).

The protein belongs to the EGR C2H2-type zinc-finger protein family. In terms of assembly, interacts with HCFC1. Interacts with WWP2. Interacts with UBC9. Interacts with CITED1. Interacts (via phosphorylated form) with SFN. Post-translationally, ubiquitinated by WWP2 leading to proteasomal degradation. Acetylated. May be deacetylated by HDAC6, HDAC10 or SIRT1.

The protein localises to the nucleus. It functions in the pathway protein modification; protein sumoylation. Sequence-specific DNA-binding transcription factor. Plays a role in hindbrain segmentation by regulating the expression of a subset of homeobox containing genes and in Schwann cell myelination by regulating the expression of genes involved in the formation and maintenance of myelin. Binds to two EGR2-consensus sites EGR2A (5'-CTGTAGGAG-3') and EGR2B (5'-ATGTAGGTG-3') in the HOXB3 enhancer and promotes HOXB3 transcriptional activation. Binds to specific DNA sites located in the promoter region of HOXA4, HOXB2 and ERBB2. Regulates hindbrain segmentation by controlling the expression of Hox genes, such as HOXA4, HOXB3 and HOXB2, and thereby specifying odd and even rhombomeres. Promotes the expression of HOXB3 in the rhombomere r5 in the hindbrain. Regulates myelination in the peripheral nervous system after birth, possibly by regulating the expression of myelin proteins, such as MPZ, and by promoting the differentiation of Schwann cells. Involved in the development of the jaw openener musculature, probably by playing a role in its innervation through trigeminal motor neurons. May play a role in adipogenesis, possibly by regulating the expression of CEBPB. Functionally, E3 SUMO-protein ligase helping SUMO1 conjugation to its coregulators NAB1 and NAB2, whose sumoylation down-regulates EGR2 transcriptional activity. In Cerdocyon thous (Crab-eating fox), this protein is E3 SUMO-protein ligase EGR2 (EGR2).